The following is a 501-amino-acid chain: Sensor histidine kinase PdtaS (501 aa).

Positions 4–150 (LGDLLAEHTV…HLETAYRLCA (147 aa)) are GAF. A PAS-like region spans residues 179–291 (DGFIRLDVDG…TEVKRRDRAL (113 aa)). One can recognise a Histidine kinase domain in the interval 300–495 (EIHHRVKNNL…DVVLRVPVGR (196 aa)). Position 303 is a phosphohistidine; by autocatalysis (histidine 303).

Post-translationally, autophosphorylated.

It localises to the cytoplasm. The enzyme catalyses ATP + protein L-histidine = ADP + protein N-phospho-L-histidine.. Functionally, member of the two-component regulatory system PdtaR/PdtaS. This two-component system plays an essential role in mycobacterial adaptation to poor nutrient conditions. Nutrient deprivation results in increasing intracellular concentrations of cyclic diguanosine monophosphate (c-di-GMP), which binds to the PdtaS sensor and promotes its autophosphorylation, leading to the activation of the signaling cascade. The phosphate group is then transferred to PdtaR. Its function is as follows. In addition, the PdtaR/PdtaS two-component system controls copper and nitric oxide (NO) resistance downstream of the intramembrane protease Rip1. This coupled Rip1/PdtaS/PdtaR circuit controls NO resistance and acute lung infection in mice by relieving PdtaR/PdtaS-mediated repression of isonitrile chalkophore biosynthesis. Two signals are required to fully inactivate the PdtaR/PdtaS system and mediate NO resistance: a cytoplasmic inhibitory signal through the PdtaS kinase mediated by direct sensing of NO and the production of PPE1-5', an NO-induced small RNA, to sequester PdtaR. The protein is Sensor histidine kinase PdtaS (pdtaS) of Mycobacterium tuberculosis (strain CDC 1551 / Oshkosh).